A 359-amino-acid polypeptide reads, in one-letter code: Probable dual-specificity RNA methyltransferase RlmN (359 aa).

Residue E91 is the Proton acceptor of the active site. Residues 97–329 (QHYGHSVCVT…KKNGVNCVVR (233 aa)) form the Radical SAM core domain. C104 and C340 are disulfide-bonded. Residues C111, C115, and C118 each coordinate [4Fe-4S] cluster. S-adenosyl-L-methionine-binding positions include 163–164 (GE), S195, 218–220 (SLH), and N296. C340 serves as the catalytic S-methylcysteine intermediate.

It belongs to the radical SAM superfamily. RlmN family. [4Fe-4S] cluster is required as a cofactor.

The protein localises to the cytoplasm. The catalysed reaction is adenosine(2503) in 23S rRNA + 2 reduced [2Fe-2S]-[ferredoxin] + 2 S-adenosyl-L-methionine = 2-methyladenosine(2503) in 23S rRNA + 5'-deoxyadenosine + L-methionine + 2 oxidized [2Fe-2S]-[ferredoxin] + S-adenosyl-L-homocysteine. It catalyses the reaction adenosine(37) in tRNA + 2 reduced [2Fe-2S]-[ferredoxin] + 2 S-adenosyl-L-methionine = 2-methyladenosine(37) in tRNA + 5'-deoxyadenosine + L-methionine + 2 oxidized [2Fe-2S]-[ferredoxin] + S-adenosyl-L-homocysteine. Its function is as follows. Specifically methylates position 2 of adenine 2503 in 23S rRNA and position 2 of adenine 37 in tRNAs. The sequence is that of Probable dual-specificity RNA methyltransferase RlmN from Streptococcus pyogenes serotype M3 (strain ATCC BAA-595 / MGAS315).